The chain runs to 556 residues: Phosphoglucomutase (556 aa).

2 residues coordinate alpha-D-glucose 1,6-bisphosphate: arginine 22 and serine 114. The active-site Phosphoserine intermediate is serine 114. 4 residues coordinate Mg(2+): serine 114, aspartate 279, aspartate 281, and aspartate 283. Serine 114 is subject to Phosphoserine. The alpha-D-glucose 1,6-bisphosphate site is built by aspartate 283, arginine 284, threonine 347, glutamate 366, serine 368, and lysine 379.

Belongs to the phosphohexose mutase family. Monomer. Mg(2+) is required as a cofactor.

The protein localises to the cytoplasm. It catalyses the reaction alpha-D-glucose 1-phosphate = alpha-D-glucose 6-phosphate. The enzyme catalyses O-phospho-L-seryl-[protein] + alpha-D-glucose 1-phosphate = alpha-D-glucose 1,6-bisphosphate + L-seryl-[protein]. The catalysed reaction is alpha-D-glucose 1,6-bisphosphate + L-seryl-[protein] = O-phospho-L-seryl-[protein] + alpha-D-glucose 6-phosphate. Catalyzes the reversible isomerization of alpha-D-glucose 1-phosphate to alpha-D-glucose 6-phosphate. The mechanism proceeds via the intermediate compound alpha-D-glucose 1,6-bisphosphate. Key enzyme in hexose metabolism. The reverse reaction is an essential step for biosynthesis because glucose 1-phosphate is the starting point for the synthesis of UDP-glucose, which acts as a precursor for the synthesis of oligosaccharides and trehalose. The protein is Phosphoglucomutase (pgmB) of Emericella nidulans (strain FGSC A4 / ATCC 38163 / CBS 112.46 / NRRL 194 / M139) (Aspergillus nidulans).